The sequence spans 456 residues: tRNA modification GTPase MnmE (456 aa).

Positions 24, 81, and 120 each coordinate (6S)-5-formyl-5,6,7,8-tetrahydrofolate. Residues 216 to 379 (GMTVVIAGRP…LREHLKACMG (164 aa)) enclose the TrmE-type G domain. Asparagine 226 serves as a coordination point for K(+). GTP-binding positions include 226 to 231 (NAGKSS), 245 to 251 (TEIAGTT), 270 to 273 (DTAG), 335 to 338 (NKAD), and 359 to 361 (SAR). Serine 230 contributes to the Mg(2+) binding site. K(+) contacts are provided by threonine 245, isoleucine 247, and threonine 250. Threonine 251 lines the Mg(2+) pocket. Residue lysine 456 participates in (6S)-5-formyl-5,6,7,8-tetrahydrofolate binding.

The protein belongs to the TRAFAC class TrmE-Era-EngA-EngB-Septin-like GTPase superfamily. TrmE GTPase family. Homodimer. Heterotetramer of two MnmE and two MnmG subunits. The cofactor is K(+).

The protein localises to the cytoplasm. Functionally, exhibits a very high intrinsic GTPase hydrolysis rate. Involved in the addition of a carboxymethylaminomethyl (cmnm) group at the wobble position (U34) of certain tRNAs, forming tRNA-cmnm(5)s(2)U34. This is tRNA modification GTPase MnmE from Pseudomonas syringae pv. syringae (strain B728a).